A 112-amino-acid polypeptide reads, in one-letter code: Large ribosomal subunit protein bL17 (112 aa).

It belongs to the bacterial ribosomal protein bL17 family. Part of the 50S ribosomal subunit. Contacts protein L32.

The polypeptide is Large ribosomal subunit protein bL17 (Caldanaerobacter subterraneus subsp. tengcongensis (strain DSM 15242 / JCM 11007 / NBRC 100824 / MB4) (Thermoanaerobacter tengcongensis)).